The following is a 428-amino-acid chain: D-amino acid dehydrogenase (428 aa).

FAD is bound at residue 3 to 17 (VVILGSGVVGVASAY).

This sequence belongs to the DadA oxidoreductase family. It depends on FAD as a cofactor.

It catalyses the reaction a D-alpha-amino acid + A + H2O = a 2-oxocarboxylate + AH2 + NH4(+). It participates in amino-acid degradation; D-alanine degradation; NH(3) and pyruvate from D-alanine: step 1/1. Oxidative deamination of D-amino acids. The sequence is that of D-amino acid dehydrogenase from Burkholderia pseudomallei (strain 1106a).